Consider the following 80-residue polypeptide: NAD(P)H-quinone oxidoreductase subunit O (80 aa).

Belongs to the complex I NdhO subunit family. NDH-1 can be composed of about 15 different subunits; different subcomplexes with different compositions have been identified which probably have different functions.

It is found in the cellular thylakoid membrane. It catalyses the reaction a plastoquinone + NADH + (n+1) H(+)(in) = a plastoquinol + NAD(+) + n H(+)(out). The enzyme catalyses a plastoquinone + NADPH + (n+1) H(+)(in) = a plastoquinol + NADP(+) + n H(+)(out). In terms of biological role, NDH-1 shuttles electrons from an unknown electron donor, via FMN and iron-sulfur (Fe-S) centers, to quinones in the respiratory and/or the photosynthetic chain. The immediate electron acceptor for the enzyme in this species is believed to be plastoquinone. Couples the redox reaction to proton translocation, and thus conserves the redox energy in a proton gradient. Cyanobacterial NDH-1 also plays a role in inorganic carbon-concentration. This is NAD(P)H-quinone oxidoreductase subunit O from Prochlorococcus marinus subsp. pastoris (strain CCMP1986 / NIES-2087 / MED4).